Here is a 191-residue protein sequence, read N- to C-terminus: Cell division protein SepF (191 aa).

The span at 151–164 shows a compositional bias: low complexity; the sequence is SSSPEEASPSSVST. Positions 151-191 are disordered; it reads SSSPEEASPSSVSTEKTPQYSLGKNTTPEPAWGNSKLSAYS. A compositionally biased stretch (polar residues) spans 165 to 178; it reads EKTPQYSLGKNTTP.

Belongs to the SepF family. Homodimer. Interacts with FtsZ.

It localises to the cytoplasm. Cell division protein that is part of the divisome complex and is recruited early to the Z-ring. Probably stimulates Z-ring formation, perhaps through the cross-linking of FtsZ protofilaments. Its function overlaps with FtsA. The sequence is that of Cell division protein SepF from Prochlorococcus marinus (strain MIT 9301).